Here is a 547-residue protein sequence, read N- to C-terminus: MAAKDVVFGDAARAKMVEGVNILANAVKVTLGPKGRNVVLERSFGGPTVTKDGVSVAKEIELKDKLQNMGAQMVKEVASKTSDNAGDGTTTATVLAQSIVREGMKFVAAGMNPMDLKRGIDKAVGAAVEELKKISKPTTTSKEIAQVGAISANSDASIGERIAEAMDKVGKEGVITVEDGKSLADELEVVEGMQFDRGYLSPYFINNPEKQVVALDNPFVLLFDKKISNIRDLLPVLEQVAKAGRPLLIIAEDVEGEALATLVVNNIRGILKTAAVKAPGFGDRRKAMLEDIAILTGGTVIAEEVGLTLEKATLNDLGQAKRIEIGKENTIIIDGAGDAAGIEGRVKQIRAQIEEATSDYDREKLQERVAKLAGGVAVIKVGAATEVEMKEKKARVEDALHATRAAVEEGIVPGGGVALLRARAAISALQGDNADQNAGIKIVLRAMEEPLRQIVLNAGEEASVVVAKVIEGKGNYGYNAASGEYGDLVEMGVLDPTKVTRTALQNAASVASLMLTTDCAVAETPKEESAPAMPGGMGGMGGMEGMM.

ATP-binding positions include 30–33 (TLGP), lysine 51, 87–91 (DGTTT), glycine 415, 479–481 (NAA), and aspartate 495.

Belongs to the chaperonin (HSP60) family. Forms a cylinder of 14 subunits composed of two heptameric rings stacked back-to-back. Interacts with the co-chaperonin GroES.

Its subcellular location is the cytoplasm. It catalyses the reaction ATP + H2O + a folded polypeptide = ADP + phosphate + an unfolded polypeptide.. In terms of biological role, together with its co-chaperonin GroES, plays an essential role in assisting protein folding. The GroEL-GroES system forms a nano-cage that allows encapsulation of the non-native substrate proteins and provides a physical environment optimized to promote and accelerate protein folding. This chain is Chaperonin GroEL, found in Cupriavidus taiwanensis (strain DSM 17343 / BCRC 17206 / CCUG 44338 / CIP 107171 / LMG 19424 / R1) (Ralstonia taiwanensis (strain LMG 19424)).